A 248-amino-acid polypeptide reads, in one-letter code: Type III pantothenate kinase (248 aa).

ATP is bound at residue 6-13; sequence DIGNTETK. A substrate-binding site is contributed by 103-106; sequence GSDR. Residue aspartate 105 is the Proton acceptor of the active site. Aspartate 124 lines the K(+) pocket. ATP is bound at residue threonine 127. Threonine 178 serves as a coordination point for substrate.

The protein belongs to the type III pantothenate kinase family. As to quaternary structure, homodimer. NH4(+) serves as cofactor. It depends on K(+) as a cofactor.

The protein localises to the cytoplasm. It catalyses the reaction (R)-pantothenate + ATP = (R)-4'-phosphopantothenate + ADP + H(+). It participates in cofactor biosynthesis; coenzyme A biosynthesis; CoA from (R)-pantothenate: step 1/5. Its function is as follows. Catalyzes the phosphorylation of pantothenate (Pan), the first step in CoA biosynthesis. The chain is Type III pantothenate kinase from Pelagibacter ubique (strain HTCC1062).